The primary structure comprises 357 residues: Peptide chain release factor 1 (357 aa).

Position 236 is an N5-methylglutamine (glutamine 236). Basic and acidic residues predominate over residues glutamate 283 to arginine 309. Residues glutamate 283–phenylalanine 313 form a disordered region.

The protein belongs to the prokaryotic/mitochondrial release factor family. In terms of processing, methylated by PrmC. Methylation increases the termination efficiency of RF1.

Its subcellular location is the cytoplasm. Functionally, peptide chain release factor 1 directs the termination of translation in response to the peptide chain termination codons UAG and UAA. The protein is Peptide chain release factor 1 of Rickettsia bellii (strain OSU 85-389).